Consider the following 347-residue polypeptide: Heat-inducible transcription repressor HrcA (347 aa).

The protein belongs to the HrcA family.

In terms of biological role, negative regulator of class I heat shock genes (grpE-dnaK-dnaJ and groELS operons). Prevents heat-shock induction of these operons. The sequence is that of Heat-inducible transcription repressor HrcA from Rhodococcus erythropolis (strain PR4 / NBRC 100887).